We begin with the raw amino-acid sequence, 668 residues long: DNA ligase (668 aa).

NAD(+) contacts are provided by residues 31–35, 80–81, and Glu112; these read DAEYD and SL. Catalysis depends on Lys114, which acts as the N6-AMP-lysine intermediate. NAD(+) is bound by residues Arg135, Glu172, Lys289, and Lys313. The Zn(2+) site is built by Cys407, Cys410, Cys425, and Cys431. One can recognise a BRCT domain in the interval 591 to 668; sequence SVPQPLAGKV…NEEQLIELLN (78 aa).

It belongs to the NAD-dependent DNA ligase family. LigA subfamily. The cofactor is Mg(2+). Mn(2+) is required as a cofactor.

The enzyme catalyses NAD(+) + (deoxyribonucleotide)n-3'-hydroxyl + 5'-phospho-(deoxyribonucleotide)m = (deoxyribonucleotide)n+m + AMP + beta-nicotinamide D-nucleotide.. Functionally, DNA ligase that catalyzes the formation of phosphodiester linkages between 5'-phosphoryl and 3'-hydroxyl groups in double-stranded DNA using NAD as a coenzyme and as the energy source for the reaction. It is essential for DNA replication and repair of damaged DNA. The polypeptide is DNA ligase (Aliivibrio fischeri (strain ATCC 700601 / ES114) (Vibrio fischeri)).